The chain runs to 440 residues: Streptokinase C (440 aa).

An N-terminal signal peptide occupies residues 1–26 (MKNYLSFGMFALLFALTFGTVNSVQA).

In terms of biological role, this protein is not a protease, but it activates plasminogen by complexing with it. As a potential virulence factor, it is thought to prevent the formation of effective fibrin barriers around the site of infection, thereby contributing to the invasiveness of the cells. This is Streptokinase C (skc) from Streptococcus dysgalactiae subsp. equisimilis (Streptococcus equisimilis).